A 150-amino-acid chain; its full sequence is D-aminoacyl-tRNA deacylase (150 aa).

A Gly-cisPro motif, important for rejection of L-amino acids motif is present at residues 138-139 (GP).

This sequence belongs to the DTD family. In terms of assembly, homodimer.

The protein resides in the cytoplasm. It carries out the reaction glycyl-tRNA(Ala) + H2O = tRNA(Ala) + glycine + H(+). The catalysed reaction is a D-aminoacyl-tRNA + H2O = a tRNA + a D-alpha-amino acid + H(+). Functionally, an aminoacyl-tRNA editing enzyme that deacylates mischarged D-aminoacyl-tRNAs. Also deacylates mischarged glycyl-tRNA(Ala), protecting cells against glycine mischarging by AlaRS. Acts via tRNA-based rather than protein-based catalysis; rejects L-amino acids rather than detecting D-amino acids in the active site. By recycling D-aminoacyl-tRNA to D-amino acids and free tRNA molecules, this enzyme counteracts the toxicity associated with the formation of D-aminoacyl-tRNA entities in vivo and helps enforce protein L-homochirality. The chain is D-aminoacyl-tRNA deacylase from Porphyromonas gingivalis (strain ATCC 33277 / DSM 20709 / CIP 103683 / JCM 12257 / NCTC 11834 / 2561).